A 515-amino-acid chain; its full sequence is 2-isopropylmalate synthase (515 aa).

In terms of domain architecture, Pyruvate carboxyltransferase spans 5-267; that stretch reads VIIFDTTLRD…DTRINTQEIH (263 aa). Residues Asp14, His202, His204, and Asn238 each contribute to the Mn(2+) site. Positions 392-515 are regulatory domain; sequence VLDKLSAHST…VADIKSHKHH (124 aa).

Belongs to the alpha-IPM synthase/homocitrate synthase family. LeuA type 1 subfamily. Homodimer. The cofactor is Mn(2+).

It is found in the cytoplasm. It catalyses the reaction 3-methyl-2-oxobutanoate + acetyl-CoA + H2O = (2S)-2-isopropylmalate + CoA + H(+). It participates in amino-acid biosynthesis; L-leucine biosynthesis; L-leucine from 3-methyl-2-oxobutanoate: step 1/4. In terms of biological role, catalyzes the condensation of the acetyl group of acetyl-CoA with 3-methyl-2-oxobutanoate (2-ketoisovalerate) to form 3-carboxy-3-hydroxy-4-methylpentanoate (2-isopropylmalate). This chain is 2-isopropylmalate synthase, found in Haemophilus influenzae (strain 86-028NP).